A 246-amino-acid chain; its full sequence is Ribonuclease PH (246 aa).

Phosphate contacts are provided by residues arginine 91 and 129 to 131; that span reads GTR.

This sequence belongs to the RNase PH family. In terms of assembly, homohexameric ring arranged as a trimer of dimers.

It catalyses the reaction tRNA(n+1) + phosphate = tRNA(n) + a ribonucleoside 5'-diphosphate. Phosphorolytic 3'-5' exoribonuclease that plays an important role in tRNA 3'-end maturation. Removes nucleotide residues following the 3'-CCA terminus of tRNAs; can also add nucleotides to the ends of RNA molecules by using nucleoside diphosphates as substrates, but this may not be physiologically important. Probably plays a role in initiation of 16S rRNA degradation (leading to ribosome degradation) during starvation. This chain is Ribonuclease PH, found in Paraburkholderia xenovorans (strain LB400).